Here is a 181-residue protein sequence, read N- to C-terminus: Isopentenyl-diphosphate Delta-isomerase (181 aa).

The Mn(2+) site is built by His24 and His30. The 141-residue stretch at Leu28–Thr168 folds into the Nudix hydrolase domain. Cys68 is a catalytic residue. Residue Cys68 participates in Mg(2+) binding. His70 provides a ligand contact to Mn(2+). Glu88 serves as a coordination point for Mg(2+). The Mn(2+) site is built by Glu117 and Glu119. Residue Glu119 is part of the active site.

The protein belongs to the IPP isomerase type 1 family. Mg(2+) is required as a cofactor. Requires Mn(2+) as cofactor.

The protein localises to the cytoplasm. The enzyme catalyses isopentenyl diphosphate = dimethylallyl diphosphate. Its pathway is isoprenoid biosynthesis; dimethylallyl diphosphate biosynthesis; dimethylallyl diphosphate from isopentenyl diphosphate: step 1/1. Catalyzes the 1,3-allylic rearrangement of the homoallylic substrate isopentenyl (IPP) to its highly electrophilic allylic isomer, dimethylallyl diphosphate (DMAPP). The sequence is that of Isopentenyl-diphosphate Delta-isomerase from Aliivibrio fischeri (strain ATCC 700601 / ES114) (Vibrio fischeri).